Reading from the N-terminus, the 426-residue chain is Serine hydroxymethyltransferase (426 aa).

Residues Leu118 and 122-124 (GHL) each bind (6S)-5,6,7,8-tetrahydrofolate. Position 227 is an N6-(pyridoxal phosphate)lysine (Lys227).

Belongs to the SHMT family. In terms of assembly, homodimer. It depends on pyridoxal 5'-phosphate as a cofactor.

It is found in the cytoplasm. It catalyses the reaction (6R)-5,10-methylene-5,6,7,8-tetrahydrofolate + glycine + H2O = (6S)-5,6,7,8-tetrahydrofolate + L-serine. Its pathway is one-carbon metabolism; tetrahydrofolate interconversion. The protein operates within amino-acid biosynthesis; glycine biosynthesis; glycine from L-serine: step 1/1. Functionally, catalyzes the reversible interconversion of serine and glycine with tetrahydrofolate (THF) serving as the one-carbon carrier. This reaction serves as the major source of one-carbon groups required for the biosynthesis of purines, thymidylate, methionine, and other important biomolecules. Also exhibits THF-independent aldolase activity toward beta-hydroxyamino acids, producing glycine and aldehydes, via a retro-aldol mechanism. The sequence is that of Serine hydroxymethyltransferase from Mycobacterium avium (strain 104).